A 221-amino-acid polypeptide reads, in one-letter code: Growth hormone-releasing peptides (221 aa).

The N-terminal stretch at 1–25 (MHLKIGTLTIRTIMLFTLCTFLTLF) is a signal peptide. Positions 26–95 (AFSTCFDETK…QPENEFLQER (70 aa)) are excised as a propeptide. Position 107 is a phenylalanine amide (Phe-107). Residues 110–127 (TSDDKIAKSIPSFDKIAK) constitute a propeptide that is removed on maturation. Residues Phe-136, Phe-156, and Phe-176 each carry the phenylalanine amide modification. Residues 179-221 (TPHSDRLQYEMNSHPLELKNPEEDSDRKKRQAMTFRIRTDLQM) constitute a propeptide that is removed on maturation.

The protein belongs to the FARP (FMRFamide related peptide) family. As to expression, observed in the suprachiasmatic nucleus and in several telencephalic and diencephalic regions.

It is found in the secreted. Primary role is to release GH from the pituitary. May act as an endogenous ligand in the bullfrog hypothalamo-hypophysial system. This chain is Growth hormone-releasing peptides, found in Aquarana catesbeiana (American bullfrog).